The following is a 170-amino-acid chain: MYISKQPFRKSKQPFRKSKQTFHKSKQPFRKFKQPFRKSKQPFRKSKQPFRRRSRIGPGDRIDYRNMSLINRFISEQGKILSRRINRLTLKQQRLITLAIKQARILSFLPFRNYENEKQFQAQAISIITGPRHRKNRHIPQLTQKFNSNRNLRNSNQNLRNNNRNLSSDC.

Disordered regions lie at residues 1–59 (MYIS…IGPG) and 151–170 (NLRNSNQNLRNNNRNLSSDC). 7 repeats span residues 4–10 (SKQPFRK), 11–17 (SKQPFRK), 18–24 (SKQTFHK), 25–31 (SKQPFRK), 32–38 (FKQPFRK), 39–45 (SKQPFRK), and 46–52 (SKQPFRR). The segment at 4-52 (SKQPFRKSKQPFRKSKQTFHKSKQPFRKFKQPFRKSKQPFRKSKQPFRR) is 7 X 7 AA tandem repeats. Residues 7 to 55 (PFRKSKQPFRKSKQTFHKSKQPFRKFKQPFRKSKQPFRKSKQPFRRRSR) show a composition bias toward basic residues.

The protein belongs to the bacterial ribosomal protein bS18 family. As to quaternary structure, part of the 30S ribosomal subunit.

Its subcellular location is the plastid. It localises to the chloroplast. This chain is Small ribosomal subunit protein bS18c (rps18), found in Zea mays (Maize).